We begin with the raw amino-acid sequence, 135 residues long: Ribosome-binding factor A (135 aa).

Belongs to the RbfA family. In terms of assembly, monomer. Binds 30S ribosomal subunits, but not 50S ribosomal subunits or 70S ribosomes.

It is found in the cytoplasm. In terms of biological role, one of several proteins that assist in the late maturation steps of the functional core of the 30S ribosomal subunit. Associates with free 30S ribosomal subunits (but not with 30S subunits that are part of 70S ribosomes or polysomes). Required for efficient processing of 16S rRNA. May interact with the 5'-terminal helix region of 16S rRNA. This chain is Ribosome-binding factor A, found in Caldicellulosiruptor saccharolyticus (strain ATCC 43494 / DSM 8903 / Tp8T 6331).